Consider the following 198-residue polypeptide: Putative glutathione S-transferase alpha-5 (198 aa).

A GST N-terminal domain is found at 2–78 (TKPTLTYFPV…YISEKHDFRG (77 aa)). Glutathione contacts are provided by residues Y8, R42, 49–50 (QL), and 62–63 (QT). One can recognise a GST C-terminal domain in the interval 80–198 (TKEERARAHQ…YLESRPQSNF (119 aa)).

Belongs to the GST superfamily. Alpha family.

The catalysed reaction is RX + glutathione = an S-substituted glutathione + a halide anion + H(+). In terms of biological role, conjugation of reduced glutathione to a wide number of exogenous and endogenous hydrophobic electrophiles. In Dictyostelium discoideum (Social amoeba), this protein is Putative glutathione S-transferase alpha-5 (gsta5).